The chain runs to 315 residues: Olfactory receptor 4K3 (315 aa).

Topologically, residues 1 to 25 (MAWSNQSAVTEFILRGLSSSLELQI) are extracellular. An N-linked (GlcNAc...) asparagine glycan is attached at Asn-5. Residues 26–49 (FYFLFFSIVYAATVLGNLLIVVTI) form a helical membrane-spanning segment. Topologically, residues 50–57 (ASEPHLHS) are cytoplasmic. Residues 58–79 (PMYFLLGNLSFIDMSLASFATP) form a helical membrane-spanning segment. The Extracellular portion of the chain corresponds to 80–100 (KMIADFLREHKAISFEGCMTQ). The cysteines at positions 97 and 189 are disulfide-linked. Residues 101–120 (MFFLHLLGGAEIVLLISMSF) traverse the membrane as a helical segment. The Cytoplasmic portion of the chain corresponds to 121–139 (DRYVAICKPLHYLTIMSRR). Residues 140 to 158 (MCVGLVILSWIVGIFHALS) traverse the membrane as a helical segment. Residues 159-195 (QLAFTVNLPFCGPNEVDSFFCDLPLVIKLACVDTYIL) are Extracellular-facing. The helical transmembrane segment at 196–219 (GVFMISTSGMIALVCFILLVISYT) threads the bilayer. Over 220-235 (IILVTVRQRSSGGSSK) the chain is Cytoplasmic. Residues 236–258 (ALSTCSAHFTVVTLFFGPCTFIY) form a helical membrane-spanning segment. Topologically, residues 259-269 (VWPFTNFPIDK) are extracellular. Residues 270–289 (VLSVFYTIYTPLLNPVIYTV) form a helical membrane-spanning segment. The Cytoplasmic portion of the chain corresponds to 290–315 (RNKDVKYSMRKLSSHIFKSRKTDHTP).

This sequence belongs to the G-protein coupled receptor 1 family.

The protein resides in the cell membrane. In terms of biological role, odorant receptor. This Homo sapiens (Human) protein is Olfactory receptor 4K3 (OR4K3).